Reading from the N-terminus, the 63-residue chain is DNA gyrase inhibitor YacG (63 aa).

Zn(2+)-binding residues include Cys9, Cys12, Cys28, and Cys32.

This sequence belongs to the DNA gyrase inhibitor YacG family. Interacts with GyrB. Zn(2+) is required as a cofactor.

In terms of biological role, inhibits all the catalytic activities of DNA gyrase by preventing its interaction with DNA. Acts by binding directly to the C-terminal domain of GyrB, which probably disrupts DNA binding by the gyrase. This chain is DNA gyrase inhibitor YacG, found in Salmonella choleraesuis (strain SC-B67).